The following is an 85-amino-acid chain: Large ribosomal subunit protein bL31B (85 aa).

The protein belongs to the bacterial ribosomal protein bL31 family. Type B subfamily. In terms of assembly, part of the 50S ribosomal subunit.

In Stutzerimonas stutzeri (strain A1501) (Pseudomonas stutzeri), this protein is Large ribosomal subunit protein bL31B.